The sequence spans 175 residues: NADH-ubiquinone oxidoreductase chain 6 (175 aa).

The next 5 membrane-spanning stretches (helical) occupy residues 1-21 (MMIYIGFILSIVFVISFVGFS), 25-45 (SPIYGGLVLIVSGGVGCGIVM), 47-67 (FGGSFLGLMVFLIYLGGMLVV), 88-108 (TVLSTFILGVLMEAMLVLYMF), and 149-169 (YGVWIIIVTGWSLFVGVLVVL).

It belongs to the complex I subunit 6 family. As to quaternary structure, core subunit of respiratory chain NADH dehydrogenase (Complex I) which is composed of 45 different subunits.

It is found in the mitochondrion inner membrane. The enzyme catalyses a ubiquinone + NADH + 5 H(+)(in) = a ubiquinol + NAD(+) + 4 H(+)(out). Core subunit of the mitochondrial membrane respiratory chain NADH dehydrogenase (Complex I) which catalyzes electron transfer from NADH through the respiratory chain, using ubiquinone as an electron acceptor. Essential for the catalytic activity and assembly of complex I. The chain is NADH-ubiquinone oxidoreductase chain 6 (MT-ND6) from Rhinoceros unicornis (Greater Indian rhinoceros).